The chain runs to 244 residues: Coenzyme Q-binding protein COQ10 homolog B, mitochondrial (244 aa).

The protein belongs to the COQ10 family. Interacts with coenzyme Q.

It is found in the mitochondrion inner membrane. Its function is as follows. Required for the function of coenzyme Q in the respiratory chain. May serve as a chaperone or may be involved in the transport of Q6 from its site of synthesis to the catalytic sites of the respiratory complexes. The chain is Coenzyme Q-binding protein COQ10 homolog B, mitochondrial (coq10b) from Xenopus laevis (African clawed frog).